The chain runs to 506 residues: Cysteine--tRNA ligase (506 aa).

Cys-34 is a binding site for Zn(2+). Positions 36–46 match the 'HIGH' region motif; the sequence is PTVYDFAHIGN. Zn(2+) is bound by residues Cys-230, His-269, and Glu-273. Residues 302 to 306 carry the 'KMSKS' region motif; that stretch reads KMSKS. Lys-305 is a binding site for ATP.

It belongs to the class-I aminoacyl-tRNA synthetase family. Monomer. Zn(2+) serves as cofactor.

The protein resides in the cytoplasm. It catalyses the reaction tRNA(Cys) + L-cysteine + ATP = L-cysteinyl-tRNA(Cys) + AMP + diphosphate. The chain is Cysteine--tRNA ligase from Brucella melitensis biotype 2 (strain ATCC 23457).